The sequence spans 426 residues: Serine/threonine-protein kinase SRPK (426 aa).

Positions 1–23 are enriched in basic and acidic residues; it reads MENIFKEKEKGKEKAKEEEKEND. A disordered region spans residues 1-40; sequence MENIFKEKEKGKEKAKEEEKENDSGDLFDSEDEGTEDYKK. The segment covering 24 to 35 has biased composition (acidic residues); the sequence is SGDLFDSEDEGT. A Protein kinase domain is found at 56-419; the sequence is YRIVKKLGWG…ARDSLEHPYM (364 aa). Residues 62-70 and Lys-86 contribute to the ATP site; that span reads LGWGHFSTV. The active-site Proton acceptor is Asp-188. Residues 318 to 328 carry the Nuclear localization signal motif; that stretch reads PKKGDKYDKTD.

This sequence belongs to the protein kinase superfamily. CMGC Ser/Thr protein kinase family.

The protein localises to the nucleus. The enzyme catalyses L-seryl-[protein] + ATP = O-phospho-L-seryl-[protein] + ADP + H(+). It catalyses the reaction L-threonyl-[protein] + ATP = O-phospho-L-threonyl-[protein] + ADP + H(+). In terms of biological role, phosphorylates serine/arginine-rich protein PSR. The chain is Serine/threonine-protein kinase SRPK from Physarum polycephalum (Slime mold).